We begin with the raw amino-acid sequence, 151 residues long: Macrodomain Ter protein (151 aa).

Belongs to the MatP family. In terms of assembly, homodimer.

It is found in the cytoplasm. In terms of biological role, required for spatial organization of the terminus region of the chromosome (Ter macrodomain) during the cell cycle. Prevents early segregation of duplicated Ter macrodomains during cell division. Binds specifically to matS, which is a 13 bp signature motif repeated within the Ter macrodomain. This chain is Macrodomain Ter protein, found in Vibrio atlanticus (strain LGP32) (Vibrio splendidus (strain Mel32)).